The chain runs to 114 residues: Phosphoribosyl-AMP cyclohydrolase (114 aa).

Position 76 (Asp76) interacts with Mg(2+). Cys77 contacts Zn(2+). 2 residues coordinate Mg(2+): Asp78 and Asp80. Zn(2+) contacts are provided by Cys93 and Cys100.

This sequence belongs to the PRA-CH family. Homodimer. Mg(2+) is required as a cofactor. Zn(2+) serves as cofactor.

It is found in the cytoplasm. It catalyses the reaction 1-(5-phospho-beta-D-ribosyl)-5'-AMP + H2O = 1-(5-phospho-beta-D-ribosyl)-5-[(5-phospho-beta-D-ribosylamino)methylideneamino]imidazole-4-carboxamide. It functions in the pathway amino-acid biosynthesis; L-histidine biosynthesis; L-histidine from 5-phospho-alpha-D-ribose 1-diphosphate: step 3/9. Its function is as follows. Catalyzes the hydrolysis of the adenine ring of phosphoribosyl-AMP. The protein is Phosphoribosyl-AMP cyclohydrolase of Streptococcus gordonii (strain Challis / ATCC 35105 / BCRC 15272 / CH1 / DL1 / V288).